The following is a 221-amino-acid chain: Coiled-coil domain-containing protein 70 (221 aa).

A coiled-coil region spans residues 129–168 (NALWEKDRNLLQEDKALWEEEKALWVEERALLEEEKALWE).

This chain is Coiled-coil domain-containing protein 70 (CCDC70), found in Macaca fascicularis (Crab-eating macaque).